We begin with the raw amino-acid sequence, 320 residues long: Phosphoribosylaminoimidazole-succinocarboxamide synthase (320 aa).

Residues 283–303 (ESDWDRNSPPPPLPESIAHQT) form a disordered region.

The protein belongs to the SAICAR synthetase family.

It catalyses the reaction 5-amino-1-(5-phospho-D-ribosyl)imidazole-4-carboxylate + L-aspartate + ATP = (2S)-2-[5-amino-1-(5-phospho-beta-D-ribosyl)imidazole-4-carboxamido]succinate + ADP + phosphate + 2 H(+). It functions in the pathway purine metabolism; IMP biosynthesis via de novo pathway; 5-amino-1-(5-phospho-D-ribosyl)imidazole-4-carboxamide from 5-amino-1-(5-phospho-D-ribosyl)imidazole-4-carboxylate: step 1/2. The chain is Phosphoribosylaminoimidazole-succinocarboxamide synthase from Rhodopirellula baltica (strain DSM 10527 / NCIMB 13988 / SH1).